A 512-amino-acid polypeptide reads, in one-letter code: Acid-sensing ion channel 2 (512 aa).

Residues 1–37 (MDLKESPSEGSLQPSSIQIFANTSTLHGIRHIFVYGP) lie on the Cytoplasmic side of the membrane. 2 positions are modified to phosphoserine: Ser8 and Ser11. A helical membrane pass occupies residues 38 to 58 (LTIRRVLWAVAFVGSLGLLLV). Topologically, residues 59–427 (ESSERVSYYF…EQKKAYEVAA (369 aa)) are extracellular. Cystine bridges form between Cys92–Cys193, Cys289–Cys364, Cys307–Cys360, Cys311–Cys358, Cys320–Cys342, and Cys322–Cys334. Residues Asn365 and Asn392 are each glycosylated (N-linked (GlcNAc...) asparagine). Residues 428 to 448 (LLGDIGGQMGLFIGASILTIL) form a helical membrane-spanning segment. Residues 441 to 443 (GAS) carry the GAS motif; ion selectivity filter motif. Topologically, residues 449 to 512 (ELFDYIYELI…ALGTLEEIAC (64 aa)) are cytoplasmic.

Belongs to the amiloride-sensitive sodium channel (TC 1.A.6) family. ASIC2 subfamily. Can form homotrimers. Heterotrimer; forms functional heterotrimers producing channel with different properties. Forms heterotrimers with ASIC1; while ASIC1 determines current amplitude, ASIC2 influences the properties of the current. Forms heterotrimers with ASIC3; resulting in channels with distinct properties. Interacts with STOM; STOM regulates the gating of ASIC2-containing channels. Interacts with PICK1; promotes ASIC3 phosphorylation by PKC and activation of ASIC2/ASIC3 heterotrimers. Expressed by sensory neurons. Expressed by nociceptive sensory neurons, spiral ganglion (SG) neurons and the retina (at protein level). Expressed in outer nuclear layer of retina (photoreceptors) and to a lower extent in distal and proximal inner nuclear layer.

It localises to the cell membrane. The enzyme catalyses Na(+)(in) = Na(+)(out). It carries out the reaction K(+)(in) = K(+)(out). The catalysed reaction is Li(+)(in) = Li(+)(out). With respect to regulation, inhibited by the diuretic drug amiloride. Forms pH-gated trimeric sodium channels that act as postsynaptic excitatory sensors in the nervous system. Upon extracellular acidification, these channels generate rapid, transient inward currents that fully desensitize. Highly selective for sodium, they are permeable to other cations. By forming heterotrimeric channels with ASIC1, could contribute to synaptic plasticity, learning, and memory. Additionally, as acid sensors at nerve terminals, plays a role in mechanosensation and phototransduction. In terms of biological role, has no pH-gated sodium channel activity per se but can associate with other ASICs to produce functional channels with specific properties. The chain is Acid-sensing ion channel 2 from Mus musculus (Mouse).